The following is a 142-amino-acid chain: Large ribosomal subunit protein uL11 (142 aa).

The protein belongs to the universal ribosomal protein uL11 family. As to quaternary structure, part of the ribosomal stalk of the 50S ribosomal subunit. Interacts with L10 and the large rRNA to form the base of the stalk. L10 forms an elongated spine to which L12 dimers bind in a sequential fashion forming a multimeric L10(L12)X complex. One or more lysine residues are methylated.

In terms of biological role, forms part of the ribosomal stalk which helps the ribosome interact with GTP-bound translation factors. This is Large ribosomal subunit protein uL11 from Tolumonas auensis (strain DSM 9187 / NBRC 110442 / TA 4).